The following is a 318-amino-acid chain: NLP effector protein 9 (318 aa).

Residues 1 to 19 form the signal peptide; sequence MRLFAFLWSSVAFLSTVQA. Residues 24-35 show a composition bias toward low complexity; sequence TASQTQDDSSTP. Disordered regions lie at residues 24–43 and 50–93; these read TASQTQDDSSTPTPTPPDKY and LRTK…PAPT. The span at 55–65 shows a compositional bias: polar residues; it reads PMATPNRTIMP. Asn60 carries an N-linked (GlcNAc...) asparagine glycan. Over residues 73 to 93 the composition is skewed to pro residues; the sequence is PEPPTPEPTYLPTLSPTPAPT. Residues 185 to 195 carry the Conserved undecapeptide motif I motif; sequence AIMYSWYFPKD. The short motif at 202–208 is the Hepta-peptide GHRHDWE motif II element; it reads GHRHDWE.

It belongs to the Necrosis inducing protein (NPP1) family.

The protein resides in the secreted. In terms of biological role, secreted effector that contributes to virulence during infection by P.capsici. Induces distinct chlorosis at 3 days after inoculation of host C.annuum leaves, and all the chlorotic areas gradually turn brown and become moderately necrotic at 7 days after inoculation. Caused only small necrotic areas at 7 days after non-host N.benthamiana leaves infection. The protein is NLP effector protein 9 of Phytophthora capsici.